The sequence spans 175 residues: COMPASS component SDC1 (175 aa).

The segment covering 1–12 (MNESENSPQHNE) has biased composition (polar residues). Residues 1–45 (MNESENSPQHNEVTVPMVEDTSSNADIPMEQIQREDNKNYDKHDN) form a disordered region. The span at 32–45 (IQREDNKNYDKHDN) shows a compositional bias: basic and acidic residues. Residues 121–162 (QTRKYLNTNVTPHLLAGMRLIAVQQPEDPLRVLGEYLIEQSN) are DPY-30.

This sequence belongs to the dpy-30 family. As to quaternary structure, component of the Set1C/COMPASS complex which consists of SET1(2), BRE2(2), SPP1(2), SDC1(1), SHG1(1), SWD1(1), SWD2(1), and SWD3(1). Interacts directly with BRE2.

The protein resides in the nucleus. Its function is as follows. Component of the Set1C/COMPASS complex that specifically mono-, di- and trimethylates histone H3 to form H3K4me1/2/3, which subsequently plays a role in telomere length maintenance and transcription elongation regulation. COMPASS recognizes ubiquitinated H2B on one face of the nucleosome which stimulates the methylation of H3 on the opposing face. The protein is COMPASS component SDC1 of Saccharomyces cerevisiae (strain ATCC 204508 / S288c) (Baker's yeast).